The following is a 922-amino-acid chain: Up-regulator of cell proliferation (922 aa).

A disordered region spans residues 1–20 (MASSGHSDLGEVTSEIKASE). Ser-3 is modified (phosphoserine). The VLIG-type G domain maps to 680 to 920 (RSRLVVLSAL…NIQQLIELVR (241 aa)).

The protein belongs to the TRAFAC class dynamin-like GTPase superfamily. Very large inducible GTPase (VLIG) family.

The protein resides in the cytoplasm. Its subcellular location is the nucleus. In terms of biological role, may be involved in cell cycle progression through the regulation of cyclin D1 expression. This is Up-regulator of cell proliferation (URGCP) from Bos taurus (Bovine).